Consider the following 125-residue polypeptide: Phosphoribosyl-AMP cyclohydrolase (125 aa).

Position 80 (Asp80) interacts with Mg(2+). A Zn(2+)-binding site is contributed by Cys81. Mg(2+) contacts are provided by Asp82 and Asp84. Positions 97 and 104 each coordinate Zn(2+).

This sequence belongs to the PRA-CH family. In terms of assembly, homodimer. It depends on Mg(2+) as a cofactor. Zn(2+) is required as a cofactor.

It localises to the cytoplasm. The catalysed reaction is 1-(5-phospho-beta-D-ribosyl)-5'-AMP + H2O = 1-(5-phospho-beta-D-ribosyl)-5-[(5-phospho-beta-D-ribosylamino)methylideneamino]imidazole-4-carboxamide. It participates in amino-acid biosynthesis; L-histidine biosynthesis; L-histidine from 5-phospho-alpha-D-ribose 1-diphosphate: step 3/9. Functionally, catalyzes the hydrolysis of the adenine ring of phosphoribosyl-AMP. This Leifsonia xyli subsp. xyli (strain CTCB07) protein is Phosphoribosyl-AMP cyclohydrolase.